Reading from the N-terminus, the 95-residue chain is MKLQLFAHKKGVGSSRNGRDSESKRLGVKRADGQFVLAGNILVRQRGTKIHPGVNVGKGKDDTLFALIDGYVTFERKGRDKKQVSVYPERKVAQN.

Residues 1-6 (MKLQLF) constitute a propeptide that is removed on maturation. A disordered region spans residues 1 to 25 (MKLQLFAHKKGVGSSRNGRDSESKR).

It belongs to the bacterial ribosomal protein bL27 family. The N-terminus is cleaved by ribosomal processing cysteine protease Prp.

The chain is Large ribosomal subunit protein bL27 from Thermoanaerobacter pseudethanolicus (strain ATCC 33223 / 39E) (Clostridium thermohydrosulfuricum).